The sequence spans 363 residues: 3-isopropylmalate dehydrogenase (363 aa).

78-91 (GPKWEHLPPDQQPE) serves as a coordination point for NAD(+). Positions 99, 109, 138, and 227 each coordinate substrate. Residues Asp-227, Asp-251, and Asp-255 each coordinate Mg(2+). 285–297 (GSAPDIAGKNIAN) is a binding site for NAD(+).

It belongs to the isocitrate and isopropylmalate dehydrogenases family. LeuB type 1 subfamily. In terms of assembly, homodimer. Requires Mg(2+) as cofactor. Mn(2+) is required as a cofactor.

The protein localises to the cytoplasm. It carries out the reaction (2R,3S)-3-isopropylmalate + NAD(+) = 4-methyl-2-oxopentanoate + CO2 + NADH. The protein operates within amino-acid biosynthesis; L-leucine biosynthesis; L-leucine from 3-methyl-2-oxobutanoate: step 3/4. Its activity is regulated as follows. Requires K(+) ions for optimum activity. Catalyzes the oxidation of 3-carboxy-2-hydroxy-4-methylpentanoate (3-isopropylmalate) to 3-carboxy-4-methyl-2-oxopentanoate. The product decarboxylates to 4-methyl-2 oxopentanoate. The chain is 3-isopropylmalate dehydrogenase from Escherichia coli (strain K12).